The chain runs to 141 residues: Antifungal protein ginkbilobin-like protein 1 (141 aa).

The first 32 residues, 1 to 32 (MSISSKFQLRSSTSLLLLVALMVVMGMDGAAA), serve as a signal peptide directing secretion. The region spanning 36–141 (TNFVSSACNT…CFIQYEQHSF (106 aa)) is the Gnk2-homologous domain. 3 disulfide bridges follow: C43/C119, C95/C104, and C107/C132. Alpha-D-mannopyranose is bound at residue N44. Residues R126 and E137 each coordinate alpha-D-mannopyranose.

In terms of biological role, exerts antifungal activity through its carbohydrate-binding specificity. This Picea glauca (White spruce) protein is Antifungal protein ginkbilobin-like protein 1.